A 354-amino-acid polypeptide reads, in one-letter code: MTTRIDLRGLLPQELEELAVRLGEAPYRGRQIFRWLHARRAKGIEVMSDLPRAFRERLALVAELPPVRVLNRLVAADGLTRKLLLGLGDGNSIECVLMIYKDGRRRNTACLSSQVGCAMGCSFCATGQGGLQRNLTASEIILQALALGAELAEGEGGNRISNIVFMGMGEPLNNYEAVMKGVRIFEDPSGWGISHRRITLSTCGIVPGIERLAREKPPLELAVSLHAVTNELRDKLMPINRRYPLEELIPACRRYAEITGRRVTFEYALIAGVNDRREDARGLSRLLRDMLAFVNIIPLNPVAGSGFKGVPPAAARAFVALLQEAGLEAAIRDSRGQDIAAACGQLRFASREVL.

Glutamate 94 acts as the Proton acceptor in catalysis. The Radical SAM core domain occupies glycine 103–arginine 332. Cysteine 110 and cysteine 343 are joined by a disulfide. The [4Fe-4S] cluster site is built by cysteine 117, cysteine 121, and cysteine 124. S-adenosyl-L-methionine-binding positions include glycine 169 to glutamate 170, serine 201, serine 224 to histidine 226, and asparagine 300. Residue cysteine 343 is the S-methylcysteine intermediate of the active site.

This sequence belongs to the radical SAM superfamily. RlmN family. It depends on [4Fe-4S] cluster as a cofactor.

It localises to the cytoplasm. It catalyses the reaction adenosine(2503) in 23S rRNA + 2 reduced [2Fe-2S]-[ferredoxin] + 2 S-adenosyl-L-methionine = 2-methyladenosine(2503) in 23S rRNA + 5'-deoxyadenosine + L-methionine + 2 oxidized [2Fe-2S]-[ferredoxin] + S-adenosyl-L-homocysteine. It carries out the reaction adenosine(37) in tRNA + 2 reduced [2Fe-2S]-[ferredoxin] + 2 S-adenosyl-L-methionine = 2-methyladenosine(37) in tRNA + 5'-deoxyadenosine + L-methionine + 2 oxidized [2Fe-2S]-[ferredoxin] + S-adenosyl-L-homocysteine. Specifically methylates position 2 of adenine 2503 in 23S rRNA and position 2 of adenine 37 in tRNAs. The sequence is that of Probable dual-specificity RNA methyltransferase RlmN from Moorella thermoacetica (strain ATCC 39073 / JCM 9320).